The sequence spans 637 residues: ATP-dependent zinc metalloprotease FtsH (637 aa).

Over 1–6 (MNNQGR) the chain is Cytoplasmic. Residues 7–27 (SILAWAALFIFVILLFNVFQS) form a helical membrane-spanning segment. The Periplasmic portion of the chain corresponds to 28–103 (DGLLGVRNNI…VVPLETRMNT (76 aa)). Residues 104 to 124 (FLGFLISWFPMLLLIGVWVFF) traverse the membrane as a helical segment. Residues 125–637 (MRQMHGGGKA…TKDKKENIIS (513 aa)) are Cytoplasmic-facing. Residue 195–202 (GPPGTGKT) coordinates ATP. Residue histidine 417 participates in Zn(2+) binding. Glutamate 418 is a catalytic residue. Zn(2+) is bound by residues histidine 421 and aspartate 495.

This sequence in the central section; belongs to the AAA ATPase family. In the C-terminal section; belongs to the peptidase M41 family. As to quaternary structure, homohexamer. It depends on Zn(2+) as a cofactor.

It is found in the cell inner membrane. In terms of biological role, acts as a processive, ATP-dependent zinc metallopeptidase for both cytoplasmic and membrane proteins. Plays a role in the quality control of integral membrane proteins. This Rickettsia prowazekii (strain Madrid E) protein is ATP-dependent zinc metalloprotease FtsH.